The sequence spans 871 residues: Nonsense-mediated mRNA decay factor SMG8 (871 aa).

The tract at residues L541–S596 is disordered. Low complexity predominate over residues S573–S583.

The protein belongs to the SMG8 family.

Involved in nonsense-mediated decay (NMD) of mRNAs containing premature stop codons. Probable component of kinase complex containing smg-1 and recruited to stalled ribosomes. The polypeptide is Nonsense-mediated mRNA decay factor SMG8 (smg-8) (Caenorhabditis briggsae).